Here is a 447-residue protein sequence, read N- to C-terminus: Adenylosuccinate synthetase (447 aa).

Residues 12-18 (GDEGKGK) and 40-42 (GHT) each bind GTP. Asp-13 (proton acceptor) is an active-site residue. Positions 13 and 40 each coordinate Mg(2+). IMP contacts are provided by residues 13-16 (DEGK), 38-41 (NAGH), Thr-128, Arg-142, Gln-223, Thr-238, and Arg-302. Catalysis depends on His-41, which acts as the Proton donor. 298-304 (TTTGRRR) is a substrate binding site. GTP-binding positions include Arg-304, 330 to 332 (KLD), and 412 to 414 (SLG).

It belongs to the adenylosuccinate synthetase family. As to quaternary structure, homodimer. The cofactor is Mg(2+).

The protein resides in the cytoplasm. It carries out the reaction IMP + L-aspartate + GTP = N(6)-(1,2-dicarboxyethyl)-AMP + GDP + phosphate + 2 H(+). It functions in the pathway purine metabolism; AMP biosynthesis via de novo pathway; AMP from IMP: step 1/2. In terms of biological role, plays an important role in the de novo pathway of purine nucleotide biosynthesis. Catalyzes the first committed step in the biosynthesis of AMP from IMP. The protein is Adenylosuccinate synthetase of Thermosynechococcus vestitus (strain NIES-2133 / IAM M-273 / BP-1).